The sequence spans 852 residues: Nucleolar protein 14 homolog (852 aa).

The disordered stretch occupies residues 1-40 (MVAKGKKASADAVYAKKTTRSANPFDNSTAQSSKRGNPFD). Positions 20-35 (RSANPFDNSTAQSSKR) are enriched in polar residues. Residues 190–221 (IDEMIVEQKRRKNEIAKEKDEVYDLTEKLDAN) adopt a coiled-coil conformation. 2 disordered regions span residues 288–324 (RRMRADGEEDEEASVAKPKHRSADDLDDGYFLAGEDD) and 338–410 (LGTH…KSAD). Positions 344–353 (GKKEAVLKGD) are enriched in basic and acidic residues. The segment covering 354–381 (ENEDDDDKEGEEEEEEDSDEESDSEVDN) has biased composition (acidic residues). A coiled-coil region spans residues 774–851 (KMSKAKEERA…ELSRAKKKKK (78 aa)).

It belongs to the NOP14 family. Component of the ribosomal small subunit (SSU) processome.

The protein resides in the nucleus. The protein localises to the nucleolus. Its function is as follows. Involved in nucleolar processing of pre-18S ribosomal RNA. Has a role in the nuclear export of 40S pre-ribosomal subunit to the cytoplasm. The sequence is that of Nucleolar protein 14 homolog (l(3)07882) from Drosophila melanogaster (Fruit fly).